The primary structure comprises 887 residues: MLSRLFRMHGLFVASHPWEVIVGTVTLTICMMSMNMFTGNNKICGWNYECPKFEEDVLSSDIIILTITRCIAILYIYFQFQNLRQLGSKYILGIAGLFTIFSSFVFSTVVIHFLDKELTGLNEALPFFLLLIDLSRASALAKFALSSNSQDEVRENIARGMAILGPTFTLDALVECLVIGVGTMSGVRQLEIMCCFGCMSVLANYFVFMTFFPACVSLVLELSRESREGRPIWQLSHFARVLEEEENKPNPVTQRVKMIMSLGLVLVHAHSRWIADPSPQNSTTEHSKVSLGLDEDVSKRIEPSVSLWQFYLSKMISMDIEQVVTLSLAFLLAVKYIFFEQAETESTLSLKNPITSPVVTPKKAPDNCCRREPLLVRRSEKLSSVEEEPGVSQDRKVEVIKPLVVETESASRATFVLGASGTSPPVAARTQELEIELPSEPRPNEECLQILESAEKGAKFLSDAEIIQLVNAKHIPAYKLETLMETHERGVSIRRQLLSTKLPEPSSLQYLPYRDYNYSLVMGACCENVIGYMPIPVGVAGPLCLDGKEYQVPMATTEGCLVASTNRGCRAIGLGGGASSRVLADGMTRGPVVRLPRACDSAEVKAWLETPEGFAVIKDAFDSTSRFARLQKLHVTMAGRNLYIRFQSKTGDAMGMNMISKGTEKALLKLQEFFPEMQILAVSGNYCTDKKPAAINWIEGRGKTVVCEAVIPAKVVREVLKTTTEAMIDVNINKNLVGSAMAGSIGGYNAHAANIVTAIYIACGQDAAQNVGSSNCITLMEASGPTNEDLYISCTMPSIEIGTVGGGTNLLPQQACLQMLGVQGACKDNPGENARQLARIVCGTVMAGELSLMAALAAGHLVRSHMVHNRSKINLQDLQGTCTKKSA.

At 1–9 (MLSRLFRMH) the chain is on the cytoplasmic side. A helical transmembrane segment spans residues 10–39 (GLFVASHPWEVIVGTVTLTICMMSMNMFTG). Topologically, residues 40-56 (NNKICGWNYECPKFEED) are lumenal. The helical transmembrane segment at 57 to 78 (VLSSDIIILTITRCIAILYIYF) threads the bilayer. Positions 61-218 (DIIILTITRC…MTFFPACVSL (158 aa)) constitute an SSD domain. The INSIG-binding motif signature appears at 75 to 78 (YIYF). The Cytoplasmic portion of the chain corresponds to 79–89 (QFQNLRQLGSK). K89 participates in a covalent cross-link: Glycyl lysine isopeptide (Lys-Gly) (interchain with G-Cter in ubiquitin). The helical transmembrane segment at 90–114 (YILGIAGLFTIFSSFVFSTVVIHFL) threads the bilayer. The Lumenal segment spans residues 115–123 (DKELTGLNE). The chain crosses the membrane as a helical span at residues 124-149 (ALPFFLLLIDLSRASALAKFALSSNS). The Cytoplasmic segment spans residues 150–159 (QDEVRENIAR). The helical transmembrane segment at 160-187 (GMAILGPTFTLDALVECLVIGVGTMSGV) threads the bilayer. The Lumenal portion of the chain corresponds to 188–191 (RQLE). The helical transmembrane segment at 192–220 (IMCCFGCMSVLANYFVFMTFFPACVSLVL) threads the bilayer. The Cytoplasmic portion of the chain corresponds to 221–248 (ELSRESREGRPIWQLSHFARVLEEEENK). Residue K248 forms a Glycyl lysine isopeptide (Lys-Gly) (interchain with G-Cter in ubiquitin) linkage. Residues 249–275 (PNPVTQRVKMIMSLGLVLVHAHSRWIA) form a helical membrane-spanning segment. The Lumenal segment spans residues 276–314 (DPSPQNSTTEHSKVSLGLDEDVSKRIEPSVSLWQFYLSK). An N-linked (GlcNAc...) asparagine glycan is attached at N281. The chain crosses the membrane as a helical span at residues 315–339 (MISMDIEQVVTLSLAFLLAVKYIFF). The Cytoplasmic segment spans residues 340–887 (EQAETESTLS…LQGTCTKKSA (548 aa)). Catalysis depends on charge relay system residues E558, K690, and D766. The active-site Proton donor is the H865. A Phosphoserine; by AMPK modification is found at S871.

The protein belongs to the HMG-CoA reductase family. In terms of assembly, homotetramer. Homodimer. Interacts (via its SSD) with INSIG1; the interaction, accelerated by sterols, leads to the recruitment of HMGCR to AMFR/gp78 for its ubiquitination by the sterol-mediated ERAD pathway. Interacts with UBIAD1. Post-translationally, N-glycosylated. Glycosylated with high mannose chains including Man(6)(GlcNAc)(2), Man(7)(GlcNAc)(2) and Man(8)(GlcNAc)(2). Deglycosylated by NGLY1 on release from the endoplasmic reticulum (ER) in a sterol-mediated manner. Undergoes sterol-mediated ubiquitination and ER-associated degradation (ERAD). Accumulation of sterols in the endoplasmic reticulum (ER) membrane, triggers binding of the reductase to the ER membrane protein INSIG1 or INSIG2. The INSIG1 binding leads to the recruitment of the ubiquitin ligase, AMFR/gp78, RNF139 or RNF145, initiating ubiquitination of the reductase. The ubiquitinated reductase is then extracted from the ER membrane and delivered to cytosolic 26S proteosomes by a mechanism probably mediated by the ATPase Valosin-containing protein VCP/p97. The INSIG2-binding leads to the recruitment of the ubiquitin ligase RNF139, initiating ubiquitination of the reductase. Lys-248 is the main site of ubiquitination. Ubiquitination is enhanced by the presence of a geranylgeranylated protein. In terms of processing, phosphorylated. Phosphorylation at Ser-871 reduces the catalytic activity.

Its subcellular location is the endoplasmic reticulum membrane. It is found in the peroxisome membrane. It catalyses the reaction (R)-mevalonate + 2 NADP(+) + CoA = (3S)-3-hydroxy-3-methylglutaryl-CoA + 2 NADPH + 2 H(+). It participates in metabolic intermediate biosynthesis; (R)-mevalonate biosynthesis; (R)-mevalonate from acetyl-CoA: step 3/3. With respect to regulation, regulated by a negative feedback mechanism through sterols and non-sterol metabolites derived from mevalonate. Phosphorylation at Ser-871 down-regulates the catalytic activity. Catalyzes the conversion of (3S)-hydroxy-3-methylglutaryl-CoA (HMG-CoA) to mevalonic acid, the rate-limiting step in the synthesis of cholesterol and other isoprenoids, thus plays a critical role in cellular cholesterol homeostasis. This Cricetulus griseus (Chinese hamster) protein is 3-hydroxy-3-methylglutaryl-coenzyme A reductase (HMGCR).